The chain runs to 330 residues: Putative glycosyltransferase HI_0258 (330 aa).

Residues 1-31 are compositionally biased toward basic and acidic residues; sequence MTDRQTDRQTDRQTDRQTDRQTDRQTDRQTD. Residues 1-32 are disordered; the sequence is MTDRQTDRQTDRQTDRQTDRQTDRQTDRQTDG. UDP contacts are provided by residues 44 to 49 and 140 to 141; these read SSDHYY and DV. Mn(2+)-binding residues include aspartate 140, aspartate 142, and histidine 270. Residue 270 to 276 coordinates UDP; it reads HYCGPNK.

This sequence belongs to the glycosyltransferase 8 family.

In Haemophilus influenzae (strain ATCC 51907 / DSM 11121 / KW20 / Rd), this protein is Putative glycosyltransferase HI_0258.